Reading from the N-terminus, the 537-residue chain is Proline--tRNA ligase (537 aa).

It belongs to the class-II aminoacyl-tRNA synthetase family. ProS type 3 subfamily. In terms of assembly, homodimer.

Its subcellular location is the cytoplasm. It carries out the reaction tRNA(Pro) + L-proline + ATP = L-prolyl-tRNA(Pro) + AMP + diphosphate. Catalyzes the attachment of proline to tRNA(Pro) in a two-step reaction: proline is first activated by ATP to form Pro-AMP and then transferred to the acceptor end of tRNA(Pro). The sequence is that of Proline--tRNA ligase from Nanoarchaeum equitans (strain Kin4-M).